We begin with the raw amino-acid sequence, 565 residues long: Proline--tRNA ligase (565 aa).

It belongs to the class-II aminoacyl-tRNA synthetase family. ProS type 1 subfamily. Homodimer.

It localises to the cytoplasm. The catalysed reaction is tRNA(Pro) + L-proline + ATP = L-prolyl-tRNA(Pro) + AMP + diphosphate. In terms of biological role, catalyzes the attachment of proline to tRNA(Pro) in a two-step reaction: proline is first activated by ATP to form Pro-AMP and then transferred to the acceptor end of tRNA(Pro). As ProRS can inadvertently accommodate and process non-cognate amino acids such as alanine and cysteine, to avoid such errors it has two additional distinct editing activities against alanine. One activity is designated as 'pretransfer' editing and involves the tRNA(Pro)-independent hydrolysis of activated Ala-AMP. The other activity is designated 'posttransfer' editing and involves deacylation of mischarged Ala-tRNA(Pro). The misacylated Cys-tRNA(Pro) is not edited by ProRS. This chain is Proline--tRNA ligase, found in Lactobacillus delbrueckii subsp. bulgaricus (strain ATCC 11842 / DSM 20081 / BCRC 10696 / JCM 1002 / NBRC 13953 / NCIMB 11778 / NCTC 12712 / WDCM 00102 / Lb 14).